Here is a 123-residue protein sequence, read N- to C-terminus: Holo-[acyl-carrier-protein] synthase (123 aa).

Mg(2+) is bound by residues aspartate 8 and glutamate 56.

The protein belongs to the P-Pant transferase superfamily. AcpS family. Mg(2+) is required as a cofactor.

It is found in the cytoplasm. The enzyme catalyses apo-[ACP] + CoA = holo-[ACP] + adenosine 3',5'-bisphosphate + H(+). Functionally, transfers the 4'-phosphopantetheine moiety from coenzyme A to a Ser of acyl-carrier-protein. The protein is Holo-[acyl-carrier-protein] synthase of Treponema denticola (strain ATCC 35405 / DSM 14222 / CIP 103919 / JCM 8153 / KCTC 15104).